Reading from the N-terminus, the 206-residue chain is Thymidylate kinase (206 aa).

10 to 17 (GIDGAGKS) is an ATP binding site.

This sequence belongs to the thymidylate kinase family.

It carries out the reaction dTMP + ATP = dTDP + ADP. Phosphorylation of dTMP to form dTDP in both de novo and salvage pathways of dTTP synthesis. This Neisseria gonorrhoeae (strain ATCC 700825 / FA 1090) protein is Thymidylate kinase.